Consider the following 374-residue polypeptide: tRNA (guanine(26)-N(2))-dimethyltransferase (374 aa).

The Trm1 methyltransferase domain maps to 1-367 (MILKEGEVVF…ATLKNVIEAI (367 aa)). 5 residues coordinate S-adenosyl-L-methionine: arginine 34, arginine 66, aspartate 86, aspartate 113, and alanine 114.

Belongs to the class I-like SAM-binding methyltransferase superfamily. Trm1 family.

The catalysed reaction is guanosine(26) in tRNA + 2 S-adenosyl-L-methionine = N(2)-dimethylguanosine(26) in tRNA + 2 S-adenosyl-L-homocysteine + 2 H(+). In terms of biological role, dimethylates a single guanine residue at position 26 of a number of tRNAs using S-adenosyl-L-methionine as donor of the methyl groups. The protein is tRNA (guanine(26)-N(2))-dimethyltransferase of Methanocaldococcus jannaschii (strain ATCC 43067 / DSM 2661 / JAL-1 / JCM 10045 / NBRC 100440) (Methanococcus jannaschii).